Reading from the N-terminus, the 237-residue chain is Uridylate kinase (237 aa).

12–15 serves as a coordination point for ATP; the sequence is KLSG. The involved in allosteric activation by GTP stretch occupies residues 20 to 25; that stretch reads GDEGFG. Residue G54 participates in UMP binding. ATP contacts are provided by G55 and R59. Residues D74 and 135–142 contribute to the UMP site; that span reads TGSPFFTT. ATP is bound by residues T162, Y168, and D171.

This sequence belongs to the UMP kinase family. Homohexamer.

The protein localises to the cytoplasm. The catalysed reaction is UMP + ATP = UDP + ADP. It participates in pyrimidine metabolism; CTP biosynthesis via de novo pathway; UDP from UMP (UMPK route): step 1/1. With respect to regulation, allosterically activated by GTP. Inhibited by UTP. Functionally, catalyzes the reversible phosphorylation of UMP to UDP. The polypeptide is Uridylate kinase (Mannheimia succiniciproducens (strain KCTC 0769BP / MBEL55E)).